A 297-amino-acid polypeptide reads, in one-letter code: N-acetylmuramic acid 6-phosphate etherase (297 aa).

One can recognise an SIS domain in the interval 55 to 218 (AAAALKSGGR…STGAMVKFGK (164 aa)). Glutamate 83 serves as the catalytic Proton donor. The active site involves glutamate 114.

The protein belongs to the GCKR-like family. MurNAc-6-P etherase subfamily. Homodimer.

It catalyses the reaction N-acetyl-D-muramate 6-phosphate + H2O = N-acetyl-D-glucosamine 6-phosphate + (R)-lactate. It functions in the pathway amino-sugar metabolism; 1,6-anhydro-N-acetylmuramate degradation. It participates in amino-sugar metabolism; N-acetylmuramate degradation. The protein operates within cell wall biogenesis; peptidoglycan recycling. Specifically catalyzes the cleavage of the D-lactyl ether substituent of MurNAc 6-phosphate, producing GlcNAc 6-phosphate and D-lactate. Together with AnmK, is also required for the utilization of anhydro-N-acetylmuramic acid (anhMurNAc) either imported from the medium or derived from its own cell wall murein, and thus plays a role in cell wall recycling. This chain is N-acetylmuramic acid 6-phosphate etherase, found in Salmonella paratyphi A (strain ATCC 9150 / SARB42).